Reading from the N-terminus, the 182-residue chain is MFRTFGRRLVSCTLPLLQSAPHDLPEGFEFMEHKVVNKDIHAPHENLEXLRLTLTRQDEFLLREEPVKCVTVTGTNGEYGIYPGHAYKIVQLNPSPLTVEYTDGTTKKYFVSGGFAHINNEGSCDVNTVECTLLDDLDLAIAEKELAAQQAALGSAKDDKAKSVVEIRISVIEAVIAALKHH.

The N-terminal 17 residues, 1–17 (MFRTFGRRLVSCTLPLL), are a transit peptide targeting the mitochondrion.

Belongs to the ATPase epsilon chain family. In terms of assembly, F-type ATPases have 2 components, F(1) - the catalytic core - and F(o) - the membrane proton channel. F(1) has five subunits: alpha(3), beta(3), gamma(1), delta(1), epsilon(1), plus the additional subunit P18 (Tb427.05.1710) that is not present in F(1)F(o) ATP synthase from metazoa. Subunit P18 (Tb927.5.1710) interacts with the alpha subunit with a 1:1 stoichiometry; the interaction is direct. Subunit gamma is part of the central stalk. F(o) has three main subunits: a, b and c. The trypanosomal ATPase complex contains additional subunits that are not present in the F(1)F(o) ATP synthase from metazoa.

The protein localises to the mitochondrion. The protein resides in the mitochondrion inner membrane. In terms of biological role, mitochondrial membrane ATP synthase (F(1)F(o) ATP synthase) produces ATP from ADP in the presence of a proton gradient across the membrane which is generated by electron transport complexes of the respiratory chain. F-type ATPases consist of two structural domains, F(1) - containing the extramembraneous catalytic core, and F(o) - containing the membrane proton channel, linked together by a central stalk and a peripheral stalk. During catalysis, ATP synthesis in the catalytic domain of F(1) is coupled via a rotary mechanism of the central stalk subunits to proton translocation. Subunits alpha and beta form the catalytic core in F(1). Rotation of the central stalk against the surrounding alpha(3)beta(3) subunits leads to hydrolysis of ATP in three separate catalytic sites on the beta subunits. Contrary to the procyclic, insect form that requires F(1)F(o) ATP synthase for ATP synthesis, the bloodstream form relies on ATP hydrolysis by F(1)F(o) ATP synthase to maintain its mitochondrial membrane potential. The polypeptide is ATP synthase subunit delta, mitochondrial (Trypanosoma brucei brucei).